The chain runs to 641 residues: Choline O-acetyltransferase (641 aa).

Residues Met-1 to Val-29 form a disordered region. Residue Ser-17 is modified to Phosphoserine. His-335 (proton acceptor) is an active-site residue. At Ser-366 the chain carries Phosphoserine. CoA is bound by residues Gly-413 to Asp-425, Ser-451, and Gln-552. A disordered region spans residues Gln-619–Pro-641.

It belongs to the carnitine/choline acetyltransferase family.

The catalysed reaction is choline + acetyl-CoA = acetylcholine + CoA. In terms of biological role, catalyzes the reversible synthesis of acetylcholine (ACh) from acetyl CoA and choline at cholinergic synapses. The chain is Choline O-acetyltransferase (CHAT) from Sus scrofa (Pig).